Consider the following 267-residue polypeptide: Hydroxynaphthalene reductase-like protein Arp2 (267 aa).

NADP(+)-binding residues include isoleucine 25, asparagine 45, aspartate 71, and asparagine 98. Catalysis depends on proton donor residues serine 147 and serine 148. Residues tyrosine 162, lysine 166, valine 195, and threonine 197 each coordinate NADP(+). The active-site Proton acceptor is tyrosine 162. Residue lysine 166 is the Lowers pKa of active site Tyr of the active site.

The protein belongs to the short-chain dehydrogenases/reductases (SDR) family.

Its function is as follows. Hydroxynaphthalene reductase-like protein; part of the Pks2 gene cluster that mediates the formation of infectious structures (appressoria), enabling these fungi to kill insects faster. The product of the Pks2 gene cluster is different from the one of Pks1 and has still not been identified. In Metarhizium anisopliae (strain ARSEF 549), this protein is Hydroxynaphthalene reductase-like protein Arp2.